The sequence spans 377 residues: Glutamate 5-kinase (377 aa).

Lys-22 contributes to the ATP binding site. Residues Ser-62, Asp-149, and Asn-161 each contribute to the substrate site. Residues 181–182 and 223–229 each bind ATP; these read TD and TGGMVTK. Positions 285-363 constitute a PUA domain; it reads RGVLVADSGA…AQLRRLLGEE (79 aa).

Belongs to the glutamate 5-kinase family.

Its subcellular location is the cytoplasm. The catalysed reaction is L-glutamate + ATP = L-glutamyl 5-phosphate + ADP. The protein operates within amino-acid biosynthesis; L-proline biosynthesis; L-glutamate 5-semialdehyde from L-glutamate: step 1/2. In terms of biological role, catalyzes the transfer of a phosphate group to glutamate to form L-glutamate 5-phosphate. This is Glutamate 5-kinase from Bifidobacterium animalis subsp. lactis (strain AD011).